A 246-amino-acid chain; its full sequence is Salivary antigen SP32 (246 aa).

The N-terminal stretch at 1–23 (MSGHILTVGLIVVVAHCATLSSS) is a signal peptide. The tract at residues 51-160 (DKFYPDISDD…PDLSKYKNSP (110 aa)) is disordered. Basic and acidic residues predominate over residues 65-78 (VVRDNGRKGGDRGR). Positions 79–124 (QSTPSGKESHPSATQTGGRRPSQSPCGESRPSGSATSGRRPSQSPR) are enriched in polar residues. Basic and acidic residues predominate over residues 141 to 155 (QQDRRQNKKQPDLSK).

In terms of assembly, interacts with human DSG1. Interacts with human DSG3. In terms of tissue distribution, salivary gland (at protein level).

Its subcellular location is the secreted. In terms of biological role, down-regulates the expression of CD86 and HLA-DR on the surface of lipopolysaccharide (LPS)-stimulated human peripheral blood mononuclear cells (PBMCs). Reduces LPS-induced secretion of IL-1beta/IL1B in human PBMCs. Reduces LPS-induced secretion of various cytokines, such as IL-1beta, TNF-alpha/TNF, MCP-1/CCL2, IL6, IL27 and IL-1alpha/IL1A, in host cultured macrophages probably via inhibition of NF-kappa-B signaling pathway. Reduces production of IFN-gamma/IFNG, IL4 and IL6 in human lymphocytes activated with PMA/ionomycin. Exhibits anti-inflammatory activity in carrageenan-induced paw edema model in rats. This Phlebotomus papatasi (Sandfly) protein is Salivary antigen SP32.